We begin with the raw amino-acid sequence, 186 residues long: MFDIGFSELILLMVLGLVVLGPKRLPIAIRTVMDWVKTIRGLAANVQNELKQELKLQELQDSIKKAESLNLQALSPELSKTVEELKAQADKMKAELEDKAAQAGTTVEDQIKEIKNAAENAEKPQNAISVEEAAETLSEAEKTPTDLTALETHEKVELNTHLSSYYPPDDIEIAPASKSQSSKTKS.

The helical transmembrane segment at 1 to 21 (MFDIGFSELILLMVLGLVVLG) threads the bilayer. The disordered stretch occupies residues 162 to 186 (LSSYYPPDDIEIAPASKSQSSKTKS). Residues 177–186 (SKSQSSKTKS) are compositionally biased toward polar residues.

This sequence belongs to the TatB family. The Tat system comprises two distinct complexes: a TatABC complex, containing multiple copies of TatA, TatB and TatC subunits, and a separate TatA complex, containing only TatA subunits. Substrates initially bind to the TatABC complex, which probably triggers association of the separate TatA complex to form the active translocon.

It is found in the cell inner membrane. Its function is as follows. Part of the twin-arginine translocation (Tat) system that transports large folded proteins containing a characteristic twin-arginine motif in their signal peptide across membranes. Together with TatC, TatB is part of a receptor directly interacting with Tat signal peptides. TatB may form an oligomeric binding site that transiently accommodates folded Tat precursor proteins before their translocation. The sequence is that of Sec-independent protein translocase protein TatB from Haemophilus influenzae (strain 86-028NP).